The following is a 342-amino-acid chain: Ferredoxin--NADP reductase (342 aa).

Residues Cys-17, Asp-36, Gln-44, Tyr-49, Val-89, Phe-124, Asp-289, and Thr-330 each coordinate FAD.

Belongs to the ferredoxin--NADP reductase type 2 family. In terms of assembly, homodimer. It depends on FAD as a cofactor.

It carries out the reaction 2 reduced [2Fe-2S]-[ferredoxin] + NADP(+) + H(+) = 2 oxidized [2Fe-2S]-[ferredoxin] + NADPH. In Rhodopseudomonas palustris (strain ATCC BAA-98 / CGA009), this protein is Ferredoxin--NADP reductase.